The chain runs to 276 residues: Diaminopimelate epimerase (276 aa).

Positions 13, 46, and 66 each coordinate substrate. Cysteine 75 serves as the catalytic Proton donor. Substrate is bound by residues 76–77, asparagine 159, asparagine 192, and 210–211; these read GN and ER. The Proton acceptor role is filled by cysteine 219. 220-221 is a substrate binding site; that stretch reads GT.

Belongs to the diaminopimelate epimerase family. In terms of assembly, homodimer.

It localises to the cytoplasm. It carries out the reaction (2S,6S)-2,6-diaminopimelate = meso-2,6-diaminopimelate. Its pathway is amino-acid biosynthesis; L-lysine biosynthesis via DAP pathway; DL-2,6-diaminopimelate from LL-2,6-diaminopimelate: step 1/1. Catalyzes the stereoinversion of LL-2,6-diaminopimelate (L,L-DAP) to meso-diaminopimelate (meso-DAP), a precursor of L-lysine and an essential component of the bacterial peptidoglycan. The polypeptide is Diaminopimelate epimerase (Azotobacter vinelandii (strain DJ / ATCC BAA-1303)).